We begin with the raw amino-acid sequence, 407 residues long: Substance-P receptor (407 aa).

A disordered region spans residues 1-20 (MDNVLPVDSDLFPNTSTNTS). Over 1 to 31 (MDNVLPVDSDLFPNTSTNTSESNQFVQPTWQ) the chain is Extracellular. Residues asparagine 14 and asparagine 18 are each glycosylated (N-linked (GlcNAc...) asparagine). The helical transmembrane segment at 32-54 (IVLWAAAYTVIVVTSVVGNVVVI) threads the bilayer. The Cytoplasmic portion of the chain corresponds to 55-64 (WIILAHKRMR). A helical membrane pass occupies residues 65-86 (TVTNYFLVNLAFAEACMAAFNT). Residues 87 to 106 (VVNFTYAVHNVWYYGLFYCK) lie on the Extracellular side of the membrane. Cysteine 105 and cysteine 180 are joined by a disulfide. A helical membrane pass occupies residues 107–128 (FHNFFPIAALFASIYSMTAVAF). At 129–148 (DRYMAIIHPLQPRLSATATK) the chain is on the cytoplasmic side. Residues 149-169 (VVIFVIWVLALLLAFPQGYYS) form a helical membrane-spanning segment. Topologically, residues 170 to 194 (TTETMPSRVVCMIEWPEHPNRTYEK) are extracellular. The helical transmembrane segment at 195–219 (AYHICVTVLIYFLPLLVIGYAYTVV) threads the bilayer. Residues 220-248 (GITLWASEIPGDSSDRYHEQVSAKRKVVK) lie on the Cytoplasmic side of the membrane. The chain crosses the membrane as a helical span at residues 249–270 (MMIVVVCTFAICWLPFHIFFLL). Topologically, residues 271–283 (PYINPDLYLKKFI) are extracellular. Residues 284-308 (QQVYLASMWLAMSSTMYNPIIYCCL) traverse the membrane as a helical segment. Residues 309-407 (NDRFRLGFKH…SSSFYSNMLA (99 aa)) are Cytoplasmic-facing. Cysteine 322 is lipidated: S-palmitoyl cysteine. Residues 362 to 407 (VGAHEDEPEEGPKATPSSLDLTSNGSSRSNSKTMTESSSFYSNMLA) form a disordered region. Positions 376-407 (TPSSLDLTSNGSSRSNSKTMTESSSFYSNMLA) are enriched in polar residues.

This sequence belongs to the G-protein coupled receptor 1 family. Interacts with ARRB1.

The protein resides in the cell membrane. Its function is as follows. This is a receptor for the tachykinin neuropeptide substance P. It is probably associated with G proteins that activate a phosphatidylinositol-calcium second messenger system. The rank order of affinity of this receptor to tachykinins is: substance P &gt; substance K &gt; neuromedin K. The polypeptide is Substance-P receptor (Tacr1) (Mus musculus (Mouse)).